Consider the following 453-residue polypeptide: GTPase Der (453 aa).

EngA-type G domains follow at residues 4–169 and 177–352; these read PIVA…PPVT and IKIA…EEHK. Residues 10-17, 57-61, 120-123, 183-190, 230-234, and 295-298 contribute to the GTP site; these read GRPNVGKS, DTGGL, NKCE, DTAGI, and NKWD. The region spanning 353-438 is the KH-like domain; that stretch reads RRVSTSVINE…PIRLLWRSKK (86 aa).

Belongs to the TRAFAC class TrmE-Era-EngA-EngB-Septin-like GTPase superfamily. EngA (Der) GTPase family. As to quaternary structure, associates with the 50S ribosomal subunit.

Its function is as follows. GTPase that plays an essential role in the late steps of ribosome biogenesis. This is GTPase Der from Nostoc sp. (strain PCC 7120 / SAG 25.82 / UTEX 2576).